We begin with the raw amino-acid sequence, 247 residues long: 2,3-bisphosphoglycerate-dependent phosphoglycerate mutase (247 aa).

Residues 8-15 (RHGESQWN), 21-22 (TG), Arg60, 87-90 (ERHY), Lys98, 114-115 (RR), and 183-184 (GN) each bind substrate. His9 acts as the Tele-phosphohistidine intermediate in catalysis. The active-site Proton donor/acceptor is the Glu87.

This sequence belongs to the phosphoglycerate mutase family. BPG-dependent PGAM subfamily.

The enzyme catalyses (2R)-2-phosphoglycerate = (2R)-3-phosphoglycerate. It participates in carbohydrate degradation; glycolysis; pyruvate from D-glyceraldehyde 3-phosphate: step 3/5. Functionally, catalyzes the interconversion of 2-phosphoglycerate and 3-phosphoglycerate. In Chlorobium chlorochromatii (strain CaD3), this protein is 2,3-bisphosphoglycerate-dependent phosphoglycerate mutase.